An 875-amino-acid polypeptide reads, in one-letter code: Phospholipase DDHD1 (875 aa).

3 disordered regions span residues 1-30 (MNYP…LGSD), 101-153 (LRYY…GAAA), and 206-231 (RAQD…SVED). Residues Ser-8 and Ser-11 each carry the phosphoserine modification. The segment covering 130 to 140 (SGGGGAAGGGP) has biased composition (gly residues). Over residues 217–228 (GPASPAGPASSS) the composition is skewed to low complexity. The active site involves Ser-540. One can recognise a DDHD domain in the interval 614-861 (LKFKVENFFC…ALFLLTFMYK (248 aa)). Ser-726 is subject to Phosphoserine. The segment at 770–804 (RSSASQPSETSRDSIEDEKKPVASPPMTTVATQTL) is disordered. Positions 779-790 (TSRDSIEDEKKP) are enriched in basic and acidic residues. Over residues 795-804 (PMTTVATQTL) the composition is skewed to polar residues.

This sequence belongs to the PA-PLA1 family. In terms of assembly, forms homooligomers and, to a much smaller extent, heterooligomers with DDHD2. Interacts with SEC23A and SEC24C. As to expression, expressed in mature testis.

The protein localises to the cytoplasm. It catalyses the reaction a 1,2-diacyl-sn-glycero-3-phosphate + H2O = a 2-acyl-sn-glycerol 3-phosphate + a fatty acid + H(+). It carries out the reaction a 1,2-diacyl-sn-glycero-3-phospho-(1D-myo-inositol) + H2O = a 2-acyl-sn-glycero-3-phospho-D-myo-inositol + a fatty acid + H(+). The catalysed reaction is 1-octadecanoyl-2-(5Z,8Z,11Z,14Z-eicosatetraenoyl)-sn-glycero-3-phospho-(1D-myo-inositol) + H2O = 2-(5Z,8Z,11Z,14Z-eicosatetraenoyl)-sn-glycero-3-phospho-(1D-myo-inositol) + octadecanoate + H(+). The enzyme catalyses a 1-acyl-2-(5Z,8Z,11Z,14Z-eicosatetraenoyl)-sn-glycero-3-phospho-(1D-myo-inositol) + H2O = 2-(5Z,8Z,11Z,14Z-eicosatetraenoyl)-sn-glycero-3-phospho-(1D-myo-inositol) + a fatty acid + H(+). It catalyses the reaction 1,2-dihexadecanoyl-sn-glycero-3-phospho-(1D-myo-inositol) + H2O = 2-hexadecanoyl-sn-glycero-3-phospho-(1D-myo-inositol) + hexadecanoate + H(+). It carries out the reaction 1,2-di-(9Z-octadecenoyl)-sn-glycero-3-phosphate + H2O = 2-(9Z-octadecenoyl)-sn-glycero-3-phosphate + (9Z)-octadecenoate + H(+). The catalysed reaction is a 1-acyl-2-(5Z,8Z,11Z,14Z)-eicosatetraenoyl-sn-glycero-3-phosphate + H2O = 2-(5Z,8Z,11Z,14Z-eicosatetraenoyl)-sn-glycero-3-phosphate + a fatty acid + H(+). The enzyme catalyses 1-hexadecanoyl-2-(9Z-octadecenoyl)-sn-glycero-3-phosphate + H2O = 2-(9Z-octadecenoyl)-sn-glycero-3-phosphate + hexadecanoate + H(+). It catalyses the reaction 1-hexadecanoyl-2-(9Z-octadecenoyl)-sn-glycero-3-phospho-L-serine + H2O = 2-(9Z-octadecenoyl)-sn-glycero-3-phospho-L-serine + hexadecanoate + H(+). It carries out the reaction 1,2-di-(5Z,8Z,11Z,14Z)-eicosatetraenoyl-sn-glycero-3-phosphate + H2O = 2-(5Z,8Z,11Z,14Z-eicosatetraenoyl)-sn-glycero-3-phosphate + (5Z,8Z,11Z,14Z)-eicosatetraenoate + H(+). The catalysed reaction is 1-octadecanoyl-2-(5Z,8Z,11Z,14Z-eicosatetraenoyl)-sn-glycero-3-phosphate + H2O = 2-(5Z,8Z,11Z,14Z-eicosatetraenoyl)-sn-glycero-3-phosphate + octadecanoate + H(+). The enzyme catalyses a 1,2-diacyl-sn-glycero-3-phosphocholine + H2O = a 2-acyl-sn-glycero-3-phosphocholine + a fatty acid + H(+). It catalyses the reaction a 1,2-diacyl-sn-glycero-3-phosphoethanolamine + H2O = a 2-acyl-sn-glycero-3-phosphoethanolamine + a fatty acid + H(+). It carries out the reaction a 1,2-diacyl-sn-glycero-3-phospho-L-serine + H2O = a 2-acyl-sn-glycero-3-phospho-L-serine + a fatty acid + H(+). The catalysed reaction is a 1,2-diacyl-sn-glycero-3-phospho-(1'-sn-glycerol) + H2O = 2-acyl-sn-glycero-3-phospho-(1'-sn-glycerol) + a fatty acid + H(+). The enzyme catalyses 1-hexadecanoyl-2-(9Z-octadecenoyl)-sn-glycero-3-phospho-(1'-sn-glycerol) + H2O = 2-(9Z-octadecenoyl)-sn-glycero-3-phospho-(1'-sn-glycerol) + hexadecanoate + H(+). It catalyses the reaction 1-acyl-2-(5Z,8Z,11Z,14Z-eicosatetraenoyl)-sn-glycero-3-phosphocholine + H2O = 2-(5Z,8Z,11Z,14Z)-eicosatetraenoyl-sn-glycero-3-phosphocholine + a fatty acid + H(+). It carries out the reaction 1-acyl-2-(5Z,8Z,11Z,14Z)-eicosatetraenoyl-sn-glycero-3-phosphoethanolamine + H2O = 2-(5Z,8Z,11Z,14Z)-eicosatetraenoyl-sn-glycero-3-phosphoethanolamine + a fatty acid + H(+). The catalysed reaction is 1-(9Z-octadecenoyl)-2-(7Z,10Z,13Z,16Z,19Z-docosapentaenoyl)-sn-glycero-3-phospho-1D-myo-inositol + H2O = 2-(7Z,10Z,13Z,16Z,19Z-docosapentaenoyl)-sn-glycero-3-phospho-1D-myo-inositol + (9Z)-octadecenoate + H(+). The enzyme catalyses 1-(9Z-octadecenoyl)-2-(5Z,8Z,11Z,14Z-eicosatetraenoyl)-sn-glycero-3-phospho-1D-myo-inositol + H2O = 2-(5Z,8Z,11Z,14Z-eicosatetraenoyl)-sn-glycero-3-phospho-(1D-myo-inositol) + (9Z)-octadecenoate + H(+). It catalyses the reaction 1,2-di-(9Z-octadecenoyl)-sn-glycero-3-phospho-1D-myo-inositol + H2O = 2-(9Z-octadecenoyl)-sn-glycero-3-phospho-1D-myo-inositol + (9Z)-octadecenoate + H(+). It carries out the reaction 1-(9Z-octadecenoyl)-2-(8Z,11Z,14Z-eicosatrienoyl)-sn-glycero-3-phospho-1D-myo-inositol + H2O = 2-(8Z,11Z,14Z-eicosatrienoyl)-sn-glycero-3-phospho-1D-myo-inositol + (9Z)-octadecenoate + H(+). The catalysed reaction is 1,2-di-(9Z-octadecenoyl)-sn-glycero-3-phosphocholine + H2O = (9Z-octadecenoyl)-sn-glycero-3-phosphocholine + (9Z)-octadecenoate + H(+). The protein operates within phospholipid metabolism; phosphatidylinositol metabolism. Functionally, phospholipase A1 (PLA1) that hydrolyzes ester bonds at the sn-1 position of glycerophospholipids producing a free fatty acid and a lysophospholipid. Prefers phosphatidate (1,2-diacyl-sn-glycero-3-phosphate, PA) as substrate in vitro, but can efficiently hydrolyze phosphatidylinositol (1,2-diacyl-sn-glycero-3-phospho-(1D-myo-inositol), PI), as well as a range of other glycerophospholipid substrates such as phosphatidylcholine (1,2-diacyl-sn-glycero-3-phosphocholine, PC), phosphatidylethanolamine (1,2-diacyl-sn-glycero-3-phosphoethanolamine, PE), phosphatidylserine (1,2-diacyl-sn-glycero-3-phospho-L-serine, PS) and phosphatidylglycerol (1,2-diacyl-sn-glycero-3-phospho-(1'-sn-glycerol), PG). Involved in the regulation of the endogenous content of polyunsaturated PI and PS lipids in the nervous system. Changes in these lipids extend to downstream metabolic products like PI phosphates PIP and PIP2, which play fundamental roles in cell biology. Regulates mitochondrial morphology. These dynamic changes may be due to PA hydrolysis at the mitochondrial surface. May play a regulatory role in spermatogenesis or sperm function. This is Phospholipase DDHD1 (DDHD1) from Bos taurus (Bovine).